We begin with the raw amino-acid sequence, 484 residues long: Pheophytinase, chloroplastic (484 aa).

Residues 1-47 (MEIISLNVVPQCSVVTWSSKLATKRLVPNRSSLLFSGVKKSRLVIRS) constitute a chloroplast transit peptide.

The protein belongs to the AB hydrolase superfamily. In terms of assembly, interacts with HCAR, RCCR, PAO and the LHCII complex. Part of a SGR1-CCE-LHCII complex, which acts in chlorophyll breakdown.

It is found in the plastid. The protein localises to the chloroplast thylakoid membrane. It localises to the chloroplast stroma. Its function is as follows. Alpha/beta hydrolase dephytylating specifically the Mg-free chlorophyll pigment (pheophytin), yielding pheophorbide. No activity on chlorophyll. Belongs to the chlorophyll catabolic enzymes (CCEs). The sequence is that of Pheophytinase, chloroplastic (PPH) from Arabidopsis thaliana (Mouse-ear cress).